The sequence spans 560 residues: Terminal uridylyltransferase Tailor (560 aa).

Residues 169-197 (EQHPKPNPNNQPVQPHPTHQTKQEKKQAQ) are disordered. A compositionally biased stretch (low complexity) spans 176-188 (PNNQPVQPHPTHQ). Positions 278 and 280 each coordinate Mg(2+). One can recognise a PAP-associated domain in the interval 455-522 (LRNFFAYFAK…VVQDPIQLNH (68 aa)).

It depends on Mg(2+) as a cofactor.

The protein localises to the cytoplasm. It carries out the reaction RNA(n) + UTP = RNA(n)-3'-uridine ribonucleotide + diphosphate. Functionally, uridylyltransferase which mediates terminal uridylation of miRNAs, leading to their degradation. Has high specificity for splicing-derived miRNAs (mirtrons) and other miRNA substrates containing a 3'-G terminal nucleotide. Appears to be a major suppressor of mirtron biogenesis. This is Terminal uridylyltransferase Tailor from Drosophila melanogaster (Fruit fly).